Reading from the N-terminus, the 339-residue chain is Probable cytosolic iron-sulfur protein assembly protein CIAO1 (339 aa).

WD repeat units follow at residues 14 to 53 (HPDSRCWFLAWNPSGTLLASCGGDRKIRIWGTEGDSWICK), 59 to 98 (GHQRTVRKVAWSPCGNYLASASFDATTCIWKKNQDDFECV), 103 to 142 (GHENEVKSVAWAPSGNLLATCSRDKSVWVWEVDEEDEYEC), 148 to 187 (SHTQDVKHVVWHPSQELLASASYDDTVKLYQEEGDDWVCC), 192 to 231 (GHESTVWSIAFDPSGQRLASCSDDRTVRIWRQYLPGNEQG), 250 to 289 (FHTRTIYDVAWCQLTGALATACGDDAIRVFEEDPGSDPQQ), and 301 to 339 (AHSQDVNCVAWNPKEPGLLASCSDDGEVAFWEYHQPAGL). Residues 176 to 178 (LYQ) carry the LYR motif; required for interaction with HSC20 motif.

The protein belongs to the WD repeat CIA1 family. In terms of assembly, component of the CIA complex. Interacts with CIAO2A and forms a complex with CIAO2B and MMS19; the interactions with CIAO2A and CIAO2B are mutually exclusive. Interacts with CHD1L, ERCC2, IREB2 and POLD1. Component of the MMXD complex, which includes CIAO1, ERCC2, CIAO2B, MMS19 and SLC25A5. Interacts with WT1. Interacts with CIAO3. Interacts (via LYR motif) with HSC20.

Its subcellular location is the cytoplasm. Its function is as follows. Key component of the cytosolic iron-sulfur protein assembly (CIA) complex, a multiprotein complex that mediates the incorporation of iron-sulfur cluster into extramitochondrial Fe/S proteins. As a CIA complex component, interacts specifically with CIAO2A or CIAO2B and MMS19 to assist different branches of iron-sulfur protein assembly, depending of its interactors. The complex CIAO1:CIAO2B:MMS19 binds to and facilitates the assembly of most cytosolic-nuclear Fe/S proteins. CIAO1:CIAO2A specifically matures ACO1 and stabilizes IREB2. Seems to specifically modulate the transactivation activity of WT1. As part of the mitotic spindle-associated MMXD complex it may play a role in chromosome segregation. This is Probable cytosolic iron-sulfur protein assembly protein CIAO1 from Mus musculus (Mouse).